We begin with the raw amino-acid sequence, 390 residues long: Nicotinate phosphoribosyltransferase (390 aa).

At histidine 211 the chain carries Phosphohistidine; by autocatalysis.

Belongs to the NAPRTase family. In terms of processing, transiently phosphorylated on a His residue during the reaction cycle. Phosphorylation strongly increases the affinity for substrates and increases the rate of nicotinate D-ribonucleotide production. Dephosphorylation regenerates the low-affinity form of the enzyme, leading to product release.

The catalysed reaction is nicotinate + 5-phospho-alpha-D-ribose 1-diphosphate + ATP + H2O = nicotinate beta-D-ribonucleotide + ADP + phosphate + diphosphate. The protein operates within cofactor biosynthesis; NAD(+) biosynthesis; nicotinate D-ribonucleotide from nicotinate: step 1/1. Its function is as follows. Catalyzes the synthesis of beta-nicotinate D-ribonucleotide from nicotinate and 5-phospho-D-ribose 1-phosphate at the expense of ATP. The chain is Nicotinate phosphoribosyltransferase from Chromohalobacter salexigens (strain ATCC BAA-138 / DSM 3043 / CIP 106854 / NCIMB 13768 / 1H11).